An 897-amino-acid polypeptide reads, in one-letter code: Echinoderm microtubule-associated protein-like 3 (897 aa).

Methionine 1 carries the post-translational modification N-acetylmethionine. A coiled-coil region spans residues 16 to 43; it reads LQTLSQRLRVQEEEMELVKAALAEALRL. Polar residues predominate over residues 51–68; the sequence is TTLQGSGISAPTRNSSIT. The interval 51–210 is disordered; sequence TTLQGSGISA…GGPGSRRSNY (160 aa). 3 stretches are compositionally biased toward low complexity: residues 96 to 108, 118 to 132, and 155 to 164; these read PSSG…NGPP, SGTQ…SSGA, and RNSSSSSSPS. Polar residues predominate over residues 175–190; the sequence is AASSANLLLRSGSTES. Phosphoserine is present on residues serine 177, serine 199, and serine 205. WD repeat units lie at residues 235-287, 296-345, 351-393, 399-435, 449-488, 505-544, 550-585, 590-627, 630-668, 675-710, 717-756, 766-824, and 831-870; these read RSLE…LYRP, GGGQ…IWDS, LQEI…VWDC, LAEI…FWNW, RKQG…TWGR, YTIV…QWGP, QEAE…LRGD, FSPV…LWDG, HALA…VLDT, SDVT…IYSV, SSRF…YWDV, RYES…LFQY, and APSR…QWRV. A disordered region spans residues 876–897; that stretch reads SGPAPATPSRTPSLSPASSLDV. Phosphothreonine; by CDK1 is present on threonine 882. Residues 883 to 897 are compositionally biased toward polar residues; the sequence is PSRTPSLSPASSLDV. At serine 884 the chain carries Phosphoserine.

This sequence belongs to the WD repeat EMAP family. In terms of assembly, homotrimer; self-association is mediated by the N-terminal coiled coil. Interacts with EML2 but not with EML1. Interacts (phosphorylated at Thr-882) with TUBG1, HAUS1, HAUS2, HAUS3, HAUS4, HAUS5, HAUS6, HAUS7 and HAUS8. In terms of processing, phosphorylation at Thr-882 during mitosis is required for interaction with TUBG1, HAUS1, HAUS2, HAUS3, HAUS4, HAUS5, HAUS6, HAUS7 and HAUS8 and their recruitment to spindle microtubules.

It localises to the cytoplasm. Its subcellular location is the cytoskeleton. It is found in the nucleus. The protein localises to the midbody. The protein resides in the spindle. Its function is as follows. Regulates mitotic spindle assembly, microtubule (MT)-kinetochore attachment and chromosome separation via recruitment of HAUS augmin-like complex and TUBG1 to the existing MTs and promoting MT-based MT nucleation. Required for proper alignnment of chromosomes during metaphase. The protein is Echinoderm microtubule-associated protein-like 3 (Eml3) of Mus musculus (Mouse).